Here is a 1405-residue protein sequence, read N- to C-terminus: DNA-directed RNA polymerase subunit beta' (1405 aa).

Zn(2+) contacts are provided by Cys-71, Cys-73, Cys-86, and Cys-89. Mg(2+)-binding residues include Asp-462, Asp-464, and Asp-466. Residues Cys-820, Cys-893, Cys-900, and Cys-903 each contribute to the Zn(2+) site.

Belongs to the RNA polymerase beta' chain family. The RNAP catalytic core consists of 2 alpha, 1 beta, 1 beta' and 1 omega subunit. When a sigma factor is associated with the core the holoenzyme is formed, which can initiate transcription. It depends on Mg(2+) as a cofactor. Zn(2+) serves as cofactor.

The enzyme catalyses RNA(n) + a ribonucleoside 5'-triphosphate = RNA(n+1) + diphosphate. Its function is as follows. DNA-dependent RNA polymerase catalyzes the transcription of DNA into RNA using the four ribonucleoside triphosphates as substrates. The polypeptide is DNA-directed RNA polymerase subunit beta' (Methylorubrum populi (strain ATCC BAA-705 / NCIMB 13946 / BJ001) (Methylobacterium populi)).